The chain runs to 98 residues: MLWDLSGGMVDQRFLVILCMVAFLAGCTQSPVTASVIVMEMTGAQPVLIWLLISSIIASIISHQFSPKPFYHFAAGCFLQQMQARQAEELRSKTEQEK.

Helical transmembrane passes span 14–34 and 41–61; these read FLVI…PVTA and MTGA…ASII.

The protein localises to the cell membrane. This is an uncharacterized protein from Haemophilus influenzae (strain ATCC 51907 / DSM 11121 / KW20 / Rd).